A 690-amino-acid chain; its full sequence is UvrABC system protein B (690 aa).

The Helicase ATP-binding domain occupies 30 to 188 (QGVMDGQTNQ…QELISLHFVR (159 aa)). 43 to 50 (GVTGSGKT) is an ATP binding site. The Beta-hairpin signature appears at 96–119 (YYDFYQPEAYIPTMDKYIAKDLKI). Positions 435–601 (QIDDLLEEIR…SIVKSVDQVL (167 aa)) constitute a Helicase C-terminal domain. Positions 641–676 (YAMAEELRLEMQEAAESMEFEKAAYLRDEVTKLEDA) constitute a UVR domain.

It belongs to the UvrB family. In terms of assembly, forms a heterotetramer with UvrA during the search for lesions. Interacts with UvrC in an incision complex.

The protein resides in the cytoplasm. Its function is as follows. The UvrABC repair system catalyzes the recognition and processing of DNA lesions. A damage recognition complex composed of 2 UvrA and 2 UvrB subunits scans DNA for abnormalities. Upon binding of the UvrA(2)B(2) complex to a putative damaged site, the DNA wraps around one UvrB monomer. DNA wrap is dependent on ATP binding by UvrB and probably causes local melting of the DNA helix, facilitating insertion of UvrB beta-hairpin between the DNA strands. Then UvrB probes one DNA strand for the presence of a lesion. If a lesion is found the UvrA subunits dissociate and the UvrB-DNA preincision complex is formed. This complex is subsequently bound by UvrC and the second UvrB is released. If no lesion is found, the DNA wraps around the other UvrB subunit that will check the other stand for damage. The chain is UvrABC system protein B from Chlorobium phaeobacteroides (strain BS1).